We begin with the raw amino-acid sequence, 383 residues long: WAT1-related protein At3g18200 (383 aa).

The span at 1–16 shows a compositional bias: basic residues; it reads MCYQTSKKKRRSRKRR. Residues 1-23 form a disordered region; the sequence is MCYQTSKKKRRSRKRRAQEEKEK. Helical transmembrane passes span 33 to 53, 65 to 85, 91 to 111, 126 to 146, 158 to 178, 204 to 224, 237 to 257, 272 to 292, 300 to 320, and 325 to 345; these read VKLV…HIVS, VYPV…AYFF, PPLT…GITA, TFAS…ACAL, GVAK…ITLY, LTLG…WMVL, TLTS…ALFV, LFTI…LQTW, VFVA…AFLI, and LYSG…LVLW. EamA domains follow at residues 44–173 and 216–344; these read FCFA…GGAT and LSWA…YLVL.

Belongs to the drug/metabolite transporter (DMT) superfamily. Plant drug/metabolite exporter (P-DME) (TC 2.A.7.4) family.

Its subcellular location is the membrane. The sequence is that of WAT1-related protein At3g18200 from Arabidopsis thaliana (Mouse-ear cress).